A 552-amino-acid polypeptide reads, in one-letter code: Formate--tetrahydrofolate ligase (552 aa).

63–70 (TPFGEGKT) contributes to the ATP binding site.

It belongs to the formate--tetrahydrofolate ligase family.

The enzyme catalyses (6S)-5,6,7,8-tetrahydrofolate + formate + ATP = (6R)-10-formyltetrahydrofolate + ADP + phosphate. The protein operates within one-carbon metabolism; tetrahydrofolate interconversion. The chain is Formate--tetrahydrofolate ligase from Caldicellulosiruptor bescii (strain ATCC BAA-1888 / DSM 6725 / KCTC 15123 / Z-1320) (Anaerocellum thermophilum).